The following is a 215-amino-acid chain: Large ribosomal subunit protein uL3 (215 aa).

Glutamine 153 bears the N5-methylglutamine mark.

Belongs to the universal ribosomal protein uL3 family. As to quaternary structure, part of the 50S ribosomal subunit. Forms a cluster with proteins L14 and L19. Methylated by PrmB.

Its function is as follows. One of the primary rRNA binding proteins, it binds directly near the 3'-end of the 23S rRNA, where it nucleates assembly of the 50S subunit. In Nitrosococcus oceani (strain ATCC 19707 / BCRC 17464 / JCM 30415 / NCIMB 11848 / C-107), this protein is Large ribosomal subunit protein uL3.